The primary structure comprises 305 residues: MRDALVVGAGPAGLTAAATLKQYGVEPLVIEAERVMATVYSYAWKPVENYPGFDGKRAIEIARAFEEMQKFFGVEVVEKERVVKAWKEGDKIVLGTQSGNEYEGKVLIIAIGILGKPRRLGIPNEDAPNVHYIVKDPTAFAGSKVVVVGGGDTAVDTATVLAESGAQVTIVHRRDQFRAPMRSIERMVRAGVKMVLNSVPKEIIAKDGKATALVVTHKEGGETVLPLDHLVISIGFEPPDLEWVKSLGVNMRGKEILVDDKMRTNVKGVFAAGDITPAPKRILVAAAQGYIAGFTAFRYIRTGVW.

The FAD site is built by glutamate 31, tyrosine 42, valine 82, and aspartate 274.

Belongs to the ferredoxin--NADP reductase type 2 family. In terms of assembly, homodimer. FAD is required as a cofactor.

It carries out the reaction 2 reduced [2Fe-2S]-[ferredoxin] + NADP(+) + H(+) = 2 oxidized [2Fe-2S]-[ferredoxin] + NADPH. This is Ferredoxin--NADP reductase from Ignicoccus hospitalis (strain KIN4/I / DSM 18386 / JCM 14125).